A 132-amino-acid chain; its full sequence is Large ribosomal subunit protein uL14 (132 aa).

This sequence belongs to the universal ribosomal protein uL14 family. In terms of assembly, part of the 50S ribosomal subunit. Forms a cluster with proteins L3 and L24e, part of which may contact the 16S rRNA in 2 intersubunit bridges.

Its function is as follows. Binds to 23S rRNA. Forms part of two intersubunit bridges in the 70S ribosome. This Picrophilus torridus (strain ATCC 700027 / DSM 9790 / JCM 10055 / NBRC 100828 / KAW 2/3) protein is Large ribosomal subunit protein uL14.